The chain runs to 337 residues: tRNA N6-adenosine threonylcarbamoyltransferase (337 aa).

Positions 111 and 115 each coordinate Fe cation. Residues 134 to 138 (LVSGG), Asp-167, Gly-180, and Asn-272 contribute to the substrate site. Residue Asp-300 coordinates Fe cation.

The protein belongs to the KAE1 / TsaD family. Fe(2+) is required as a cofactor.

It is found in the cytoplasm. It catalyses the reaction L-threonylcarbamoyladenylate + adenosine(37) in tRNA = N(6)-L-threonylcarbamoyladenosine(37) in tRNA + AMP + H(+). Required for the formation of a threonylcarbamoyl group on adenosine at position 37 (t(6)A37) in tRNAs that read codons beginning with adenine. Is involved in the transfer of the threonylcarbamoyl moiety of threonylcarbamoyl-AMP (TC-AMP) to the N6 group of A37, together with TsaE and TsaB. TsaD likely plays a direct catalytic role in this reaction. The chain is tRNA N6-adenosine threonylcarbamoyltransferase from Salmonella typhi.